A 580-amino-acid chain; its full sequence is TRAF-type zinc finger domain-containing protein 1 (580 aa).

Ala-2 bears the N-acetylalanine mark. Residues 27–103 (IHEIHCQRNI…DLELSVVKLK (77 aa)) form a TRAF-type zinc finger. A phosphoserine mark is found at Ser-278, Ser-320, Ser-326, Ser-327, Ser-409, Ser-415, Ser-430, Ser-450, Ser-469, and Ser-532. Disordered stretches follow at residues 395-453 (TANH…SPNR), 468-509 (PSGP…ASGH), and 524-580 (FAPS…EEEE). Residues 407-417 (QDSQPENTSAE) are compositionally biased toward polar residues.

As to quaternary structure, interacts with MAVS, TICAM1, TRAF1, TRAF2, TRAF3 and TRAF6. In terms of tissue distribution, expressed in skeletal muscle, brain, liver, kidney, spleen and bone marrow. Expression depends on STAT1.

Negative feedback regulator that controls excessive innate immune responses. Regulates both Toll-like receptor 4 (TLR4) and DDX58/RIG1-like helicases (RLH) pathways. May inhibit the LTR pathway by direct interaction with TRAF6 and attenuation of NF-kappa-B activation. May negatively regulate the RLH pathway downstream from MAVS and upstream of NF-kappa-B and IRF3. This Mus musculus (Mouse) protein is TRAF-type zinc finger domain-containing protein 1 (Trafd1).